The primary structure comprises 538 residues: [Pyruvate dehydrogenase [acetyl-transferring]]-phosphatase 1, mitochondrial (538 aa).

A mitochondrion-targeting transit peptide spans 1 to 71; it reads MPAPTQLFFP…WWQYTQGRRY (71 aa). Residues 109-525 form the PPM-type phosphatase domain; it reads ILGFDSNQLP…DDITIIVVQF (417 aa). Mn(2+) is bound by residues D144 and G145. K202 carries the N6-acetyllysine modification. 2 residues coordinate Mn(2+): D418 and D516.

Belongs to the PP2C family. As to quaternary structure, heterodimer of a catalytic (PDP1) and a regulatory (PDPR) subunit. The cofactor is Mn(2+). Mg(2+) is required as a cofactor.

The protein localises to the mitochondrion. It carries out the reaction O-phospho-L-seryl-[pyruvate dehydrogenase E1 alpha subunit] + H2O = L-seryl-[pyruvate dehydrogenase E1 alpha subunit] + phosphate. Magnesium-dependent and calcium-stimulated. PDP1 activity strongly depends on its Ca(2+)-dependent binding to the lipoyl domain of E2 subunit of component of the pyruvate dehydrogenase complex. Functionally, mitochondrial enzyme that catalyzes the dephosphorylation and concomitant reactivation of the alpha subunit of the E1 component of the pyruvate dehydrogenase complex (PDC), thereby stimulating the conversion of pyruvate into acetyl-CoA. The protein is [Pyruvate dehydrogenase [acetyl-transferring]]-phosphatase 1, mitochondrial (Pdp1) of Mus musculus (Mouse).